We begin with the raw amino-acid sequence, 159 residues long: SsrA-binding protein (159 aa).

Residues 133 to 159 are disordered; sequence KKLHDKRETSKERDWNRQKNRLLKERG. Over residues 137–159 the composition is skewed to basic and acidic residues; that stretch reads DKRETSKERDWNRQKNRLLKERG.

This sequence belongs to the SmpB family.

The protein resides in the cytoplasm. Required for rescue of stalled ribosomes mediated by trans-translation. Binds to transfer-messenger RNA (tmRNA), required for stable association of tmRNA with ribosomes. tmRNA and SmpB together mimic tRNA shape, replacing the anticodon stem-loop with SmpB. tmRNA is encoded by the ssrA gene; the 2 termini fold to resemble tRNA(Ala) and it encodes a 'tag peptide', a short internal open reading frame. During trans-translation Ala-aminoacylated tmRNA acts like a tRNA, entering the A-site of stalled ribosomes, displacing the stalled mRNA. The ribosome then switches to translate the ORF on the tmRNA; the nascent peptide is terminated with the 'tag peptide' encoded by the tmRNA and targeted for degradation. The ribosome is freed to recommence translation, which seems to be the essential function of trans-translation. The chain is SsrA-binding protein from Sinorhizobium medicae (strain WSM419) (Ensifer medicae).